We begin with the raw amino-acid sequence, 479 residues long: 5-hydroxytryptamine receptor 7 (479 aa).

Residues 1-83 are Extracellular-facing; sequence MMDVNSSGRP…INYGRVEKVV (83 aa). N-linked (GlcNAc...) asparagine glycosylation is found at N5 and N66. Residues 84–108 form a helical membrane-spanning segment; sequence IGSILTLITLLTIAGNCLVVISVCF. Topologically, residues 109–118 are cytoplasmic; sequence VKKLRQPSNY. Residues 119-140 form a helical membrane-spanning segment; sequence LIVSLALADLSVAVAVMPFVSV. Over 141-152 the chain is Extracellular; sequence TDLIGGKWIFGH. A helical membrane pass occupies residues 153–178; sequence FFCNVFIAMDVMCCTASIMTLCVISI. C155 and C231 are oxidised to a cystine. D162 is a serotonin binding site. Residues 179–198 are Cytoplasmic-facing; that stretch reads DRYLGITRPLTYPVRQNGKC. Residues 199 to 219 traverse the membrane as a helical segment; that stretch reads MAKMILSVWLLSASITLPPLF. Residues 220–237 lie on the Extracellular side of the membrane; that stretch reads GWAQNVNDDKVCLISQDF. Residues 238–260 form a helical membrane-spanning segment; it reads GYTIYSTAVAFYIPMSVMLFMYY. The Cytoplasmic segment spans residues 261 to 326; sequence QIYKAARKSA…SIFKREQKAA (66 aa). The chain crosses the membrane as a helical span at residues 327–352; that stretch reads TTLGIIVGAFTVCWLPFFLLSTARPF. Topologically, residues 353 to 363 are extracellular; sequence ICGTSCSCIPL. The chain crosses the membrane as a helical span at residues 364 to 387; sequence WVERTFLWLGYANSLINPFIYAFF. Residues 388–479 are Cytoplasmic-facing; that stretch reads NRDLRTTYRS…TVEKKVMIHD (92 aa). C401 is lipidated: S-palmitoyl cysteine.

The protein belongs to the G-protein coupled receptor 1 family. As to expression, predominant isoform in spleen, caudate and hippocampus. In terms of tissue distribution, expressed at lower levels. Minor isoform in terms of expression.

The protein localises to the cell membrane. Functionally, G-protein coupled receptor for 5-hydroxytryptamine (serotonin), a biogenic hormone that functions as a neurotransmitter, a hormone and a mitogen. Ligand binding causes a conformation change that triggers signaling via guanine nucleotide-binding proteins (G proteins) and modulates the activity of downstream effectors. HTR7 is coupled to G(s) G alpha proteins and mediates activation of adenylate cyclase activity. This Homo sapiens (Human) protein is 5-hydroxytryptamine receptor 7.